We begin with the raw amino-acid sequence, 443 residues long: Tol-Pal system protein TolB (443 aa).

The first 33 residues, 1 to 33, serve as a signal peptide directing secretion; it reads MKIGIINTKIRTVFSAFACMIAASLVCTMPARA.

It belongs to the TolB family. The Tol-Pal system is composed of five core proteins: the inner membrane proteins TolA, TolQ and TolR, the periplasmic protein TolB and the outer membrane protein Pal. They form a network linking the inner and outer membranes and the peptidoglycan layer.

The protein localises to the periplasm. In terms of biological role, part of the Tol-Pal system, which plays a role in outer membrane invagination during cell division and is important for maintaining outer membrane integrity. The protein is Tol-Pal system protein TolB of Brucella anthropi (strain ATCC 49188 / DSM 6882 / CCUG 24695 / JCM 21032 / LMG 3331 / NBRC 15819 / NCTC 12168 / Alc 37) (Ochrobactrum anthropi).